A 107-amino-acid polypeptide reads, in one-letter code: ATPase inhibitor, mitochondrial (107 aa).

The N-terminal 25 residues, 1–25 (MAGSALAVRARLGVWGMRVLQTRGF), are a transit peptide targeting the mitochondrion. Residues 25–58 (FGSDSSESMDSGAGSIREAGGAFGKREKAEEDRY) are disordered. The tract at residues 26–52 (GSDSSESMDSGAGSIREAGGAFGKREK) is N-terminal inhibitory region. A Phosphoserine modification is found at S39. Positions 48-58 (GKREKAEEDRY) are enriched in basic and acidic residues. Residues 60–107 (REKTREQLAALKKHHEDEIDHHSKEIERLQKQIERHKKKIKYLKNSEH) adopt a coiled-coil conformation. The tract at residues 74 to 106 (HEDEIDHHSKEIERLQKQIERHKKKIKYLKNSE) is antiparallel alpha-helical coiled coil region. At K103 the chain carries N6-succinyllysine.

This sequence belongs to the ATPase inhibitor family. In terms of assembly, homodimer; represents the active form and is present at a pH value below 6.5. Homotetramer; represents the inactive form and is present at a pH value above 7.0.

It localises to the mitochondrion. Its function is as follows. Endogenous F(1)F(o)-ATPase inhibitor limiting ATP depletion when the mitochondrial membrane potential falls below a threshold and the F(1)F(o)-ATP synthase starts hydrolyzing ATP to pump protons out of the mitochondrial matrix. Required to avoid the consumption of cellular ATP when the F(1)F(o)-ATP synthase enzyme acts as an ATP hydrolase. Indirectly acts as a regulator of heme synthesis in erythroid tissues: regulates heme synthesis by modulating the mitochondrial pH and redox potential, allowing FECH to efficiently catalyze the incorporation of iron into protoporphyrin IX to produce heme. In Rattus norvegicus (Rat), this protein is ATPase inhibitor, mitochondrial.